A 713-amino-acid chain; its full sequence is Vacuolar amino acid transporter 4 (713 aa).

Residues 1–33 are disordered; sequence MVTNNGDGEHLGIRRNGNLRHPSNNMKIPRRAQ. Residues 1–242 lie on the Vacuolar side of the membrane; it reads MVTNNGDGEH…IDKVPFLTRN (242 aa). Residues 21 to 33 are compositionally biased toward polar residues; it reads HPSNNMKIPRRAQ. Serine 88 bears the Phosphoserine mark. Positions 99-121 are disordered; it reads RSSVSHGNEAIPRVNPTKNSSAS. Phosphoserine occurs at positions 130 and 165. Residues 200-233 form a disordered region; the sequence is KRQEHQLNDSASSDFTSHESDSINQSSPSSNQDI. Over residues 221 to 231 the composition is skewed to low complexity; that stretch reads SINQSSPSSNQ. The helical transmembrane segment at 243 to 263 threads the bilayer; it reads FLEFLYVFGHFAGESFEDDFI. At 264–301 the chain is on the cytoplasmic side; it reads PDSSNMMIRGEDERSALLSRPDHMKVLPSAKGTTSTKK. A helical transmembrane segment spans residues 302-322; sequence VFLILLKSFIGTGVLFLPNAF. The Vacuolar segment spans residues 323 to 326; that stretch reads HNGG. The helical transmembrane segment at 327–347 threads the bilayer; the sequence is LFFSVSMLAFFGIYSYWCYYI. Over 348–373 the chain is Cytoplasmic; that stretch reads LVQAKSSCGVSSFGDIGLKLYGPWMR. The helical transmembrane segment at 374 to 394 threads the bilayer; that stretch reads IIILFSLVITQVGFSGAYMIF. At 395–410 the chain is on the vacuolar side; it reads TAKNLQAFLDNVFHVG. Residues 411–431 traverse the membrane as a helical segment; it reads VLPLSYLMVFQTIIFIPLSFI. Residues 432–438 lie on the Cytoplasmic side of the membrane; sequence RNISKLS. A helical membrane pass occupies residues 439–459; that stretch reads LPSLLANFFIMAGLVIVIIFT. Residues 460-483 lie on the Vacuolar side of the membrane; the sequence is AKRLFFDLMGTPAMGVVYGLNADR. A helical transmembrane segment spans residues 484–504; it reads WTLFIGTAIFAFEGIGLIIPV. Residues 505 to 515 lie on the Cytoplasmic side of the membrane; that stretch reads QDSMRNPEKFP. A helical transmembrane segment spans residues 516-536; the sequence is LVLALVILTATILFISIATLG. Residues 537 to 561 are Vacuolar-facing; sequence YLAYGSNVQTVILLNLPQSNIFVNL. Residues 562-582 traverse the membrane as a helical segment; the sequence is IQLFYSIAIMLSTPLQLFPAI. The Cytoplasmic segment spans residues 583–621; it reads KIIENKFFPKFTKIYVKHDDLTTRVELRPNSGKLNWKIK. Residues 622 to 642 traverse the membrane as a helical segment; that stretch reads WLKNFIRSIIVIIVVSIAYFG. The Vacuolar portion of the chain corresponds to 643-648; that stretch reads SDNLDK. A helical transmembrane segment spans residues 649-669; it reads FVSVIGSLACIPLVYIYPSML. The Cytoplasmic portion of the chain corresponds to 670–692; sequence HLRGNSLPETKGEFWRFKPMLDT. The chain crosses the membrane as a helical span at residues 693-711; it reads ILIFFGIASMLYTSYQSIF. Residues 712 to 713 are Vacuolar-facing; the sequence is GV.

The protein belongs to the amino acid/polyamine transporter 2 family.

It is found in the vacuole membrane. Its function is as follows. Involved in amino acid efflux from the vacuole to the cytoplasm. Capable of transporting large neutral amino acids including tyrosine, glutamine, asparagine, isoleucine and leucine. The chain is Vacuolar amino acid transporter 4 (AVT4) from Saccharomyces cerevisiae (strain ATCC 204508 / S288c) (Baker's yeast).